A 691-amino-acid polypeptide reads, in one-letter code: WD repeat-containing protein 48 homolog (691 aa).

WD repeat units follow at residues Leu-27–Tyr-82, Arg-88–Ser-130, Leu-133–Phe-168, Gly-180–Lys-219, Gly-222–Thr-261, Ala-264–Val-303, Lys-306–Asn-347, and Ser-399–Glu-438.

This sequence belongs to the WD repeat WDR48 family. Interacts with usp-46; the interaction increases the catalytic activity of usp-46 in the presence of wdr-20.

Functionally, together with wdr-20, binds to and stimulates the activity of the deubiquitinating enzyme usp-46, leading to deubiquitination and stabilization of the glr-1 glutamate receptor. The protein is WD repeat-containing protein 48 homolog (wdr-48) of Caenorhabditis briggsae.